Here is a 691-residue protein sequence, read N- to C-terminus: Elongation factor G (691 aa).

A tr-type G domain is found at 8-282 (ERVRNIGIAA…AVVDYLPAPV (275 aa)). GTP contacts are provided by residues 17–24 (AHIDAGKT), 81–85 (DTPGH), and 135–138 (NKMD).

It belongs to the TRAFAC class translation factor GTPase superfamily. Classic translation factor GTPase family. EF-G/EF-2 subfamily.

The protein resides in the cytoplasm. Catalyzes the GTP-dependent ribosomal translocation step during translation elongation. During this step, the ribosome changes from the pre-translocational (PRE) to the post-translocational (POST) state as the newly formed A-site-bound peptidyl-tRNA and P-site-bound deacylated tRNA move to the P and E sites, respectively. Catalyzes the coordinated movement of the two tRNA molecules, the mRNA and conformational changes in the ribosome. The chain is Elongation factor G from Prochlorococcus marinus (strain AS9601).